A 349-amino-acid polypeptide reads, in one-letter code: Phenylalanine--tRNA ligase alpha subunit (349 aa).

Mg(2+) is bound at residue Glu258.

This sequence belongs to the class-II aminoacyl-tRNA synthetase family. Phe-tRNA synthetase alpha subunit type 1 subfamily. Tetramer of two alpha and two beta subunits. Mg(2+) is required as a cofactor.

The protein localises to the cytoplasm. It carries out the reaction tRNA(Phe) + L-phenylalanine + ATP = L-phenylalanyl-tRNA(Phe) + AMP + diphosphate + H(+). In Rickettsia felis (strain ATCC VR-1525 / URRWXCal2) (Rickettsia azadi), this protein is Phenylalanine--tRNA ligase alpha subunit.